We begin with the raw amino-acid sequence, 407 residues long: RING finger protein 44 (407 aa).

The tract at residues 26–58 (LSSSPGQLWGRPSNLSVEEHRASAPAGRSPRML) is disordered. The RING-type; atypical zinc-finger motif lies at 355 to 396 (CVVCFSDFEVRQLLRVLPCNHEFHAKCVDKWLKANRTCPICR).

This is RING finger protein 44 (Rnf44) from Mus musculus (Mouse).